The following is a 40-amino-acid chain: Photosystem II reaction center protein J (40 aa).

A helical transmembrane segment spans residues 8-28 (IPLWIIGTVTGIPVIGLIGIF).

Belongs to the PsbJ family. PSII is composed of 1 copy each of membrane proteins PsbA, PsbB, PsbC, PsbD, PsbE, PsbF, PsbH, PsbI, PsbJ, PsbK, PsbL, PsbM, PsbT, PsbX, PsbY, PsbZ, Psb30/Ycf12, at least 3 peripheral proteins of the oxygen-evolving complex and a large number of cofactors. It forms dimeric complexes.

The protein localises to the plastid. The protein resides in the chloroplast thylakoid membrane. In terms of biological role, one of the components of the core complex of photosystem II (PSII). PSII is a light-driven water:plastoquinone oxidoreductase that uses light energy to abstract electrons from H(2)O, generating O(2) and a proton gradient subsequently used for ATP formation. It consists of a core antenna complex that captures photons, and an electron transfer chain that converts photonic excitation into a charge separation. In Citrus sinensis (Sweet orange), this protein is Photosystem II reaction center protein J.